The primary structure comprises 929 residues: Band 4.1-like protein 3 (929 aa).

Methionine 1 carries the N-acetylmethionine modification. The segment at 1-72 is disordered; it reads MTTESGSDSE…STPVKREIGD (72 aa). Threonine 2 is modified (N-acetylthreonine; in Band 4.1-like protein 3, N-terminally processed). The segment covering 20 to 33 has biased composition (low complexity); the sequence is QEAAGPQGQAGAQP. A Phosphoserine modification is found at serine 96. Residues 118–399 form the FERM domain; it reads MQCKVTLLDG…EHHTFFRLLL (282 aa). The hydrophilic stretch occupies residues 402–528; the sequence is APPKKFLTLG…PVTALRHEGK (127 aa). 3 positions are modified to phosphoserine: serine 428, serine 451, and serine 486. The tract at residues 490–554 is disordered; the sequence is LITTVTPEKK…TESDQEEDAE (65 aa). Phosphothreonine is present on threonine 495. Residues 496–516 show a composition bias toward basic and acidic residues; it reads PEKKAEEERVEEEDRRKKAEE. At threonine 518 the chain carries Phosphothreonine. Positions 523–536 are enriched in basic and acidic residues; sequence LRHEGKTDSERTDT. A phosphoserine mark is found at histidine 525 and serine 543. Threonine 545 bears the Phosphothreonine mark. Serine 547 is modified (phosphoserine). A spectrin--actin-binding region spans residues 559–602; that stretch reads DLDKTQDELMKHQTNISELKRTFLETSTETALTNEWEKRLSTSP. Disordered regions lie at residues 608–630, 665–689, and 705–807; these read RQED…SGEK, LETK…STEK, and VHAS…SPGG. At threonine 725 the chain carries Phosphothreonine. Residues 726 to 737 show a composition bias toward basic and acidic residues; that stretch reads PTDRRHTGKGKE. Residues 777–929 are C-terminal (CTD); sequence RTSEGLEQKS…TEITPEDGED (153 aa). The span at 789-802 shows a compositional bias: low complexity; sequence ESSTVRVESTSVGS. A phosphoserine mark is found at serine 802 and serine 804. Threonine 923 is modified (phosphothreonine).

In terms of assembly, interacts (via FERM domain) with CADM1. Interacts (via FERM domain) with PRMT3; the interaction is direct and inhibits the protein-arginine N-methyltransferase activity of PRMT3. Interacts with PRMT5. Interacts with PRMT6. As to quaternary structure, has the complete spectrin--actin-binding (SAB) domain and fully interacts with spectrin and actin. In terms of tissue distribution, detected in brain (at protein level). Highest expression in brain, lower in testis, adrenal gland, heart and kidney. Also present in muscle and epithelial cells. Isoform 1 is expressed in brain, isoform 2 is expressed in heart and isoform 3 is mostly expressed in kidney but also in heart and brain. Isoform 6 seems to be most abundant in kidney while isoform 4 and isoform 5 are predominantly expressed in heart and brain.

The protein resides in the cytoplasm. It localises to the cytoskeleton. It is found in the cell membrane. The protein localises to the cell junction. Functionally, tumor suppressor that inhibits cell proliferation and promotes apoptosis. Modulates the activity of protein arginine N-methyltransferases, including PRMT3 and PRMT5. This chain is Band 4.1-like protein 3, found in Mus musculus (Mouse).